A 467-amino-acid polypeptide reads, in one-letter code: Regulatory protein NPR6 (467 aa).

One can recognise a BTB domain in the interval 27-111; sequence SDVTFSVEGR…LYSGQVSIVP (85 aa). Residues 117–131 form a C2HC NPR-type zinc finger; sequence RSNCGDRGCWHTHCT. Cys120, Cys125, His127, and Cys130 together coordinate Zn(2+). 4 ANK repeats span residues 247–276, 277–306, 311–340, and 344–378; these read QKIR…LNLD, ESLA…DVNY, TGKT…DPNV, and DGIT…KLRL. Positions 434-467 are disordered; that stretch reads RDIGDDNSNQREGMNLHHHHHDPSTMYHHHHHHF. Positions 449–467 are enriched in basic residues; it reads LHHHHHDPSTMYHHHHHHF.

Belongs to the plant 'ANKYRIN-BTB/POZ' family. 'NOOT-BOP-COCH-like' (NBCL) subfamily. As to quaternary structure, homodimer or heterodimer with BOP2. Interacts with PAN.

It is found in the cytoplasm. The protein localises to the nucleus. It functions in the pathway protein modification; protein ubiquitination. In terms of biological role, may act as a substrate-specific adapter of an E3 ubiquitin-protein ligase complex (CUL3-RBX1-BTB) which mediates the ubiquitination and subsequent proteasomal degradation of target proteins. Acts redundantly with BOP2. BOP1/2 promote leaf and floral meristem fate and determinacy in a pathway targeting AP1 and AGL24. BOP1/2 act as transcriptional co-regulators through direct interaction with TGA factors, including PAN, a direct regulator of AP1. Controls lateral organ fate through positive regulation of adaxial-abaxial polarity genes ATHB-14/PHB, YAB1/FIL and YAB3, and through positive regulation of LOB domain-containing genes LOB, LBD6/AS2 and LBD36. Promotes and maintains a developmentally determinate state in leaf cells through the negative regulation of JAG, JGL and class I KNOX genes. Is also involved in nectary development, formation of normal abscission zones (AZs) and suppression of bract formation, probably by regulating the cell wall disorganization. The sequence is that of Regulatory protein NPR6 from Arabidopsis thaliana (Mouse-ear cress).